Here is a 326-residue protein sequence, read N- to C-terminus: Eukaryotic translation initiation factor 3 subunit I (326 aa).

5 WD repeats span residues 8–47 (GHER…RLGT), 50–89 (GHQG…IIAS), 145–184 (MTES…KVVD), 188–227 (DHAA…CLKT), and 285–326 (GHFG…NIFE).

Belongs to the eIF-3 subunit I family. Component of the eukaryotic translation initiation factor 3 (eIF-3) complex. The eIF-3 complex interacts with pix.

It localises to the cytoplasm. Component of the eukaryotic translation initiation factor 3 (eIF-3) complex, which is involved in protein synthesis of a specialized repertoire of mRNAs and, together with other initiation factors, stimulates binding of mRNA and methionyl-tRNAi to the 40S ribosome. The eIF-3 complex specifically targets and initiates translation of a subset of mRNAs involved in cell proliferation. The protein is Eukaryotic translation initiation factor 3 subunit I of Drosophila pseudoobscura pseudoobscura (Fruit fly).